The following is a 614-amino-acid chain: Zinc metalloproteinase-disintegrin-like protein H4 subunit A (614 aa).

An N-terminal signal peptide occupies residues 1–20 (MIQPLLVVTCLVVFPYQVSS). A propeptide spanning residues 21–193 (IILESGNVND…RKASQLVATS (173 aa)) is cleaved from the precursor. Pyrrolidone carboxylic acid (Glu) is present on glutamate 194. The 197-residue stretch at 201-397 (KYIELVIVVD…IKSKCIDNKP (197 aa)) folds into the Peptidase M12B domain. An N-linked (GlcNAc...) asparagine glycan is attached at asparagine 220. 17 cysteine pairs are disulfide-bonded: cysteine 312/cysteine 392, cysteine 352/cysteine 376, cysteine 354/cysteine 359, cysteine 408/cysteine 437, cysteine 419/cysteine 432, cysteine 421/cysteine 427, cysteine 431/cysteine 454, cysteine 445/cysteine 451, cysteine 450/cysteine 476, cysteine 463/cysteine 483, cysteine 470/cysteine 502, cysteine 495/cysteine 507, cysteine 514/cysteine 564, cysteine 529/cysteine 575, cysteine 542/cysteine 552, cysteine 559/cysteine 601, and cysteine 595/cysteine 607. Histidine 337 serves as a coordination point for Zn(2+). The short motif at 337–348 (HELGHNLGMDHD) is the Metal-binding element. The active-site Proton acceptor is glutamate 338. Residues histidine 341 and histidine 347 each contribute to the Zn(2+) site. The region spanning 405-491 (PAFCGNYFVE…ECPTDVLQRN (87 aa)) is the Disintegrin domain. Residues asparagine 410, phenylalanine 412, glutamate 414, glutamate 417, and aspartate 420 each coordinate Ca(2+). An N-linked (GlcNAc...) asparagine glycan is attached at asparagine 433. Positions 469–471 (ECD) match the D/ECD-tripeptide motif. 2 residues coordinate Ca(2+): aspartate 471 and aspartate 486.

It belongs to the venom metalloproteinase (M12B) family. P-III subfamily. As to quaternary structure, homodimer; disulfide-linked. Heterodimer of A and B subunits; disulfide-linked. Zn(2+) is required as a cofactor. Post-translationally, N-glycosylated. The N-terminus is blocked. As to expression, expressed by the venom gland (at protein level). Expressed by the venom gland.

It is found in the secreted. With respect to regulation, the proteolytic activity of the heterodimer of A and B subunits requires Zn(2+) and Ca(2+) ions. In terms of biological role, heterodimer (A and B subunits): Zinc metalloprotease that has fibrinogenolytic and hemorrhagic activities. Cleaves insulin B chain preferably at '40-Tyr-|-Leu-41' bond, but also at '28-Gln-|-His-29' and '34-His-|-Leu-35' bonds. Hydrolyzes effectively isolated extracellular matrix (ECM) bovine fibronectin, and only slightly, basal membrane (BM) proteins human collagen IV and murine laminin, in vitro. Cleaves nidogen-1 (at '350-Ser-|-Phe-351' and '380-Tyr-|-Asn-381' bonds), but not laminin, in a solubilized BM preparation. Hydrolyzes plasma proteins involved in blood coagulation in vitro. It slightly shortens prothrombin time and significantly prolongs thrombin time. Has potent alpha-fibrinogenase activity cleaving human fibrinogen alpha chain at '441-Glu-|-Leu-442' and '539-Glu-|-Phe-540' bonds, and to a lesser extent, beta chain at '52-Lys-|-Arg-53' and '48-Pro-|-Leu-49' bonds, but does not cleave gamma chain. Hydrolyzes bovine prothrombin at '200-Ser-|-Gly-201' bond, but does not activate it, however, it cleaves fragment 1 and prethrombin 1 from it. Hydrolyzes bovine factor X heavy chain, but the cleavage does not produce an activated factor Xa heavy chain. No hydrolysis or activation of plasminogen. The ability to degrade some of the ECM, BM and plasma proteins is likely the main contributor to its hemorrhagic activity. Inhibits platelet aggregation induced by collagen in vitro. Its binding to glycosaminoglycans (GAGs) may assist in concentrating it in the proximity of blood vessel walls enabling in vivo degradation of BM protein components. Cytotoxic to cultured HeLa cancer cells in a concentration- and time-dependent manner. In the solubilized BM preparation (Matrigel), it induces morphological changes in the HeLa cells and inhibits their adhesion, however, the viability of the cells is not reduced. This chain is Zinc metalloproteinase-disintegrin-like protein H4 subunit A, found in Vipera ammodytes ammodytes (Western sand viper).